A 541-amino-acid chain; its full sequence is Membrane protein insertase YidC (541 aa).

A run of 6 helical transmembrane segments spans residues 7–27 (FLIV…GVTH), 289–309 (YLLT…VTLP), 356–376 (IIHS…LAFY), 430–450 (LPIL…LEMV), 463–483 (LSAQ…MFAQ), and 498–518 (IMMA…SGLV).

It belongs to the OXA1/ALB3/YidC family. Type 1 subfamily. As to quaternary structure, interacts with the Sec translocase complex via SecD. Specifically interacts with transmembrane segments of nascent integral membrane proteins during membrane integration.

It localises to the cell inner membrane. Functionally, required for the insertion and/or proper folding and/or complex formation of integral membrane proteins into the membrane. Involved in integration of membrane proteins that insert both dependently and independently of the Sec translocase complex, as well as at least some lipoproteins. Aids folding of multispanning membrane proteins. In Ruthia magnifica subsp. Calyptogena magnifica, this protein is Membrane protein insertase YidC.